The following is a 354-amino-acid chain: MTELKNDRYLRALLRQPVDVTPVWMMRQAGRYLPEYKATRAQAGDFMSLCKNAELACEVTLQPLRRYPLDAAILFSDILTVPDAMELGLYFEAGEGPRFTAPVTCKADVDKLPIPDPEDELGYVMNAVRTIRRELKGEVPLIGFSGSPWTLATYMVEGGSSKAFTVIKKMMYADPQALHLLLDKLAKSVTLYLNAQIKAGAQSVMIFDTWGGVLTGRDYQHFSLYYMHKIVDGLLRENDGRRVPVTLFTKGGGQWLEAMAETGCDALGLDWTTDIADARRRVGHKVALQGNMDPSMLYAPPARIEDEVATILSGFGQGEGHVFNLGHGIHQDVPPEHAGVFVEAVHRLSAQYHN.

Substrate is bound by residues 27–31 (RQAGR), Asp77, Tyr154, Thr209, and His327.

This sequence belongs to the uroporphyrinogen decarboxylase family. In terms of assembly, homodimer.

The protein localises to the cytoplasm. It carries out the reaction uroporphyrinogen III + 4 H(+) = coproporphyrinogen III + 4 CO2. It functions in the pathway porphyrin-containing compound metabolism; protoporphyrin-IX biosynthesis; coproporphyrinogen-III from 5-aminolevulinate: step 4/4. Functionally, catalyzes the decarboxylation of four acetate groups of uroporphyrinogen-III to yield coproporphyrinogen-III. The protein is Uroporphyrinogen decarboxylase of Salmonella arizonae (strain ATCC BAA-731 / CDC346-86 / RSK2980).